The chain runs to 106 residues: UPF0449 protein C19orf25 homolog (106 aa).

It belongs to the UPF0449 family.

The polypeptide is UPF0449 protein C19orf25 homolog (Xenopus tropicalis (Western clawed frog)).